A 342-amino-acid chain; its full sequence is MQNEYSQFEQRKRDHIELALMPANQSSELNPFDHFSLVHEALPDLDFKDISIQSIRFNKPVEKPFIISSMTAGHSNAIEINYRLMEACSKTKWAMGVGSQRRELTDKQAAFEWEPLRRDFPMVSLFSNLGIAQLIDTPISAIQRLIDTLHAEALIIHCNPLQECIQPEGTTNFHGCWAALEALVKKINSPVIVKETGCGFSKNTLLRLNNIGVAAVDVSGVGGTHWGRIEGHRADKDPIRHRTADTFRNWGIDTLQSTHNAISLNPSFEIWGSGGVRNGLDAAKLFALGATTVGFAKPMLEAALDSTDQVLTQMNTIEYELKTAMFCTGSLVLDDLKEKACP.

Residue arginine 11–lysine 12 participates in substrate binding. FMN-binding positions include serine 68, serine 69 to threonine 71, serine 99, and asparagine 128. Residue serine 99 to arginine 101 coordinates substrate. Glutamine 162 provides a ligand contact to substrate. Glutamate 163 is a binding site for Mg(2+). Residues lysine 194, serine 219, threonine 224, glycine 275–arginine 277, and alanine 296–lysine 297 each bind FMN.

Belongs to the IPP isomerase type 2 family. In terms of assembly, homooctamer. Dimer of tetramers. FMN is required as a cofactor. The cofactor is NADPH. It depends on Mg(2+) as a cofactor.

The protein localises to the cytoplasm. The catalysed reaction is isopentenyl diphosphate = dimethylallyl diphosphate. In terms of biological role, involved in the biosynthesis of isoprenoids. Catalyzes the 1,3-allylic rearrangement of the homoallylic substrate isopentenyl (IPP) to its allylic isomer, dimethylallyl diphosphate (DMAPP). This is Isopentenyl-diphosphate delta-isomerase from Legionella pneumophila (strain Lens).